The chain runs to 120 residues: Small ribosomal subunit protein bS6 (120 aa).

Belongs to the bacterial ribosomal protein bS6 family.

Binds together with bS18 to 16S ribosomal RNA. This Blochmanniella floridana protein is Small ribosomal subunit protein bS6.